Here is a 214-residue protein sequence, read N- to C-terminus: Adenylate kinase (214 aa).

ATP is bound at residue 10 to 15 (GAGKGT). Residues 30-59 (STGDMLRAAIKAGTELGKQAKAVIDAGQLV) form an NMP region. Residues T31, R36, 57 to 59 (QLV), 85 to 88 (GFPR), and Q92 each bind AMP. The LID stretch occupies residues 122–159 (GRRAHLPSGRTYHVVYNPPKVEGKDDVTGEDLVVRDDD). ATP-binding positions include R123 and 132-133 (TY). R156 and R167 together coordinate AMP. K200 contacts ATP.

This sequence belongs to the adenylate kinase family. Monomer.

Its subcellular location is the cytoplasm. It carries out the reaction AMP + ATP = 2 ADP. The protein operates within purine metabolism; AMP biosynthesis via salvage pathway; AMP from ADP: step 1/1. Functionally, catalyzes the reversible transfer of the terminal phosphate group between ATP and AMP. Plays an important role in cellular energy homeostasis and in adenine nucleotide metabolism. This Vibrio campbellii (strain ATCC BAA-1116) protein is Adenylate kinase.